A 466-amino-acid chain; its full sequence is Ribulose bisphosphate carboxylase large chain (466 aa).

At Lys-5 the chain carries N6,N6,N6-trimethyllysine. Substrate contacts are provided by Asn-114 and Thr-164. The active-site Proton acceptor is Lys-166. Lys-168 is a substrate binding site. Mg(2+) is bound by residues Lys-192, Asp-194, and Glu-195. N6-carboxylysine is present on Lys-192. Residue His-285 is the Proton acceptor of the active site. Positions 286, 318, and 370 each coordinate substrate.

This sequence belongs to the RuBisCO large chain family. Type I subfamily. As to quaternary structure, heterohexadecamer of 8 large chains and 8 small chains; disulfide-linked. The disulfide link is formed within the large subunit homodimers. The cofactor is Mg(2+). In terms of processing, the disulfide bond which can form in the large chain dimeric partners within the hexadecamer appears to be associated with oxidative stress and protein turnover.

Its subcellular location is the plastid. The protein resides in the chloroplast. The catalysed reaction is 2 (2R)-3-phosphoglycerate + 2 H(+) = D-ribulose 1,5-bisphosphate + CO2 + H2O. The enzyme catalyses D-ribulose 1,5-bisphosphate + O2 = 2-phosphoglycolate + (2R)-3-phosphoglycerate + 2 H(+). RuBisCO catalyzes two reactions: the carboxylation of D-ribulose 1,5-bisphosphate, the primary event in carbon dioxide fixation, as well as the oxidative fragmentation of the pentose substrate in the photorespiration process. Both reactions occur simultaneously and in competition at the same active site. This is Ribulose bisphosphate carboxylase large chain from Vitis aestivalis (Grape).